The primary structure comprises 418 residues: Actin-related protein 3 (418 aa).

A2 carries the N-acetylalanine modification. An N6-acetyllysine mark is found at K240, K244, K251, and K254.

Belongs to the actin family. ARP3 subfamily. In terms of assembly, component of the Arp2/3 complex composed of ACTR2/ARP2, ACTR3/ARP3, ARPC1B/p41-ARC, ARPC2/p34-ARC, ARPC3/p21-ARC, ARPC4/p20-ARC and ARPC5/p16-ARC. Interacts with WHDC1. Interacts weakly with MEFV. Interacts with AVIL.

Its subcellular location is the cytoplasm. It is found in the cytoskeleton. The protein localises to the cell projection. It localises to the nucleus. ATP-binding component of the Arp2/3 complex, a multiprotein complex that mediates actin polymerization upon stimulation by nucleation-promoting factor (NPF). The Arp2/3 complex mediates the formation of branched actin networks in the cytoplasm, providing the force for cell motility. Seems to contact the pointed end of the daughter actin filament. In podocytes, required for the formation of lamellipodia downstream of AVIL and PLCE1 regulation. In addition to its role in the cytoplasmic cytoskeleton, the Arp2/3 complex also promotes actin polymerization in the nucleus, thereby regulating gene transcription and repair of damaged DNA. The Arp2/3 complex promotes homologous recombination (HR) repair in response to DNA damage by promoting nuclear actin polymerization, leading to drive motility of double-strand breaks (DSBs). Plays a role in ciliogenesis. This is Actin-related protein 3 (ACTR3) from Bos taurus (Bovine).